We begin with the raw amino-acid sequence, 518 residues long: Ankyrin repeat and SOCS box protein 3 (518 aa).

ANK repeat units lie at residues 9–38, 42–71, 78–107, 111–140, 145–174, 178–207, 211–240, 246–275, 279–308, 315–346, and 348–373; these read DTCS…SVDV, RGWM…SENY, EGFC…DPNA, EETT…NVNG, CGWN…NKEC, FGIT…NVNC, DKAT…DPDL, SWQL…RACD, NKVS…SPDA, GFSS…QINE, and HLAY…SLGP. Residues 441–504 enclose the SOCS box domain; it reads MLSARASNAW…HNYLLYEDVL (64 aa).

This sequence belongs to the ankyrin SOCS box (ASB) family. In terms of assembly, interacts with ELOB and TNFRSF1B.

Its subcellular location is the cytoplasm. It functions in the pathway protein modification; protein ubiquitination. In terms of biological role, probable substrate-recognition component of a SCF-like ECS (Elongin-Cullin-SOCS-box protein) E3 ubiquitin-protein ligase complex which mediates the ubiquitination and subsequent proteasomal degradation of target proteins. Recognizes TNFRSF1B. Plays a role in the down-regulation of antiviral innate immunity by targeting MAVS for ubiquitin-proteasomal degradation. Also destabilizes TRAF6 by enhancing its 'Lys-48'-linked polyubiquitination. This Homo sapiens (Human) protein is Ankyrin repeat and SOCS box protein 3 (ASB3).